Here is a 124-residue protein sequence, read N- to C-terminus: UPF0231 protein Shewana3_0655 (124 aa).

The protein belongs to the UPF0231 family.

This chain is UPF0231 protein Shewana3_0655, found in Shewanella sp. (strain ANA-3).